A 1873-amino-acid polypeptide reads, in one-letter code: Girdin (1873 aa).

The Calponin-homology (CH) domain occupies 12-132 (QFMTSPLVTW…KLLLLLLGCA (121 aa)). Residues 196-425 (HLRRLIDERD…EMAQKQSMDE (230 aa)) adopt a coiled-coil conformation. Phosphoserine occurs at positions 233, 237, and 449. Coiled coils occupy residues 458–1232 (TSSK…ESKN) and 1268–1385 (HKNL…KFYD). Disordered regions lie at residues 816–841 (ENKS…NKRL) and 1013–1034 (EERM…GRES). The residue at position 1020 (serine 1020) is a Phosphoserine. At serine 1387 the chain carries Phosphoserine. A phosphoinositide-binding region spans residues 1390–1408 (RRRGNWITLKMRKLIKSKK). Over residues 1407–1416 (KKDINRERQK) the composition is skewed to basic and acidic residues. Disordered regions lie at residues 1407–1459 (KKDI…LGTK), 1560–1602 (TTSF…SNNN), and 1616–1643 (QSRP…GSSP). Residue serine 1417 is modified to Phosphoserine; by PKB/AKT1. Polar residues-rich tracts occupy residues 1417 to 1430 (SLTL…SSEG), 1445 to 1459 (VGSN…LGTK), 1560 to 1579 (TTSF…STGS), and 1616 to 1626 (QSRPQSHSSGD). Threonine 1421 carries the phosphothreonine modification. The GBA signature appears at 1674-1704 (KAGSPGSEVVTLQQFLEESNKLTSIQLKSSS). Phosphoserine is present on residues serine 1677, serine 1692, and serine 1719. The interval 1715 to 1825 (SLSVSSDFLG…GTTRRTSIHD (111 aa)) is SH2-like; required for interaction with growth factor receptors. Positions 1738–1873 (SGKTPGDFYD…KSRSREQQSS (136 aa)) are disordered. Residues 1745 to 1755 (FYDRRTTKPEF) show a composition bias toward basic and acidic residues. Tyrosine 1767 is modified (phosphotyrosine). Composition is skewed to polar residues over residues 1768–1781 (TISS…STQG), 1789–1801 (TSVS…SNPY), and 1809–1820 (SVISTAEGTTRR). Tyrosine 1801 bears the Phosphotyrosine mark. Phosphoserine is present on residues serine 1822 and serine 1839. Residues 1822 to 1832 (SIHDFLSKDSR) are compositionally biased toward basic and acidic residues. Low complexity predominate over residues 1839–1852 (SSPPTAGSSSTTAS). The span at 1858-1873 (QESRNSKSRSREQQSS) shows a compositional bias: basic and acidic residues.

This sequence belongs to the CCDC88 family. Homodimer. Interacts (via GBA motif) with guanine nucleotide-binding protein G(i) alpha subunits GNAI1, GNAI2 and GNAI3. Also interacts (via GNA motif) with guanine nucleotide-binding protein G(s) alpha subunit GNAS. Interaction with G(i) alpha subunits occurs before interaction with GNAS and is regulated by phosphorylation; phosphorylation at Ser-1677 enhances binding to G(i) alpha subunits while phosphorylation at Ser-1692 abolishes G(i) alpha subunit binding, promoting binding to GNAS. Interacts (via C-terminal SH2-like region) with growth factor receptors EGFR, INSR and KDR/VEGFR2 (via their autophosphorylated cytoplasmic tails). Forms a complex with EGFR and GNAI3 which leads to enhanced EGFR signaling and triggering of cell migration; ligand stimulation is required for recruitment of GNAI3 to the complex. Interacts (tyrosine-phosphorylated form) with phosphatidylinositol 3-kinase (PI3K) regulatory subunit PIK3R1/p85a (via SH2 domains); the interaction enables recruitment of PIK3R1 to the EGFR receptor, enhancing PI3K activity and cell migration. Interacts with serine/threonine-protein kinase PRKCQ; the interaction leads to phosphorylation of CCDC88A and inhibition of its guanine nucleotide exchange factor activity. Interacts (via C-terminus) with DISC1; the interaction is direct. Interacts with AKT proteins; the interaction is inhibited in the presence of DISC1. Interacts with AKT1/PKB (via C-terminus). The non-phosphorylated form interacts with phosphatidylinositol 4-phosphate [Pi(4)P] and weakly with phosphatidylinositol 3-phosphate [Pi(3)P]. Interacts with microtubules. Interacts with actin. In terms of processing, phosphorylation is induced by epidermal growth factor (EGF) in a phosphoinositide 3-kinase (PI3K)-dependent manner. Phosphorylation by AKT1/PKB is necessary for the delocalization from the cell membrane and for cell migration. Phosphorylated on tyrosine residues which promotes binding to phosphatidylinositol 3-kinase (PI3K) regulatory subunit PIK3R1/p85a and enhances PI3K activity. Tyrosine-phosphorylated by both receptor and non-receptor tyrosine kinases in vitro. Tyrosine phosphorylation is required for AKT1-dependent phosphorylation of Ser-1417. Phosphorylation at Ser-1692 by PRKCQ disrupts interaction with GNAI3 and inhibits guanine nucleotide exchange factor activity. In terms of tissue distribution, expressed in the dentate gyrus, pyramidal cell layer of hippocampal regions CA1 and CA3 at postnatal 15. Expressed highly in neurons. Weakly in neuron progenitors (at protein level). Expressed in the dentate granule cell layer of the hippocampus. Expressed highly in the adult testis, moderately in the brain and at a low level in the spleen, lungs and fat.

The protein localises to the cell membrane. The protein resides in the cytoplasm. Its subcellular location is the cytosol. It is found in the cytoplasmic vesicle. It localises to the cell projection. The protein localises to the lamellipodium. The protein resides in the cytoskeleton. Its subcellular location is the cilium basal body. It is found in the microtubule organizing center. It localises to the centrosome. The protein localises to the centriole. In terms of biological role, bifunctional modulator of guanine nucleotide-binding proteins (G proteins). Acts as a non-receptor guanine nucleotide exchange factor which binds to and activates guanine nucleotide-binding protein G(i) alpha subunits. Also acts as a guanine nucleotide dissociation inhibitor for guanine nucleotide-binding protein G(s) subunit alpha GNAS. Essential for cell migration. Interacts in complex with G(i) alpha subunits with the EGFR receptor, retaining EGFR at the cell membrane following ligand stimulation and promoting EGFR signaling which triggers cell migration. Binding to Gi-alpha subunits displaces the beta and gamma subunits from the heterotrimeric G-protein complex which enhances phosphoinositide 3-kinase (PI3K)-dependent phosphorylation and kinase activity of AKT1/PKB. Phosphorylation of AKT1/PKB induces the phosphorylation of downstream effectors GSK3 and FOXO1/FKHR, and regulates DNA replication and cell proliferation. Binds in its tyrosine-phosphorylated form to the phosphatidylinositol 3-kinase (PI3K) regulatory subunit PIK3R1 which enables recruitment of PIK3R1 to the EGFR receptor, enhancing PI3K activity and cell migration. Plays a role as a key modulator of the AKT-mTOR signaling pathway, controlling the tempo of the process of newborn neuron integration during adult neurogenesis, including correct neuron positioning, dendritic development and synapse formation. Inhibition of G(s) subunit alpha GNAS leads to reduced cellular levels of cAMP and suppression of cell proliferation. Essential for the integrity of the actin cytoskeleton. Required for formation of actin stress fibers and lamellipodia. May be involved in membrane sorting in the early endosome. Plays a role in ciliogenesis and cilium morphology and positioning and this may partly be through regulation of the localization of scaffolding protein CROCC/Rootletin. The protein is Girdin (Ccdc88a) of Mus musculus (Mouse).